Consider the following 63-residue polypeptide: Large ribosomal subunit protein bL28 (63 aa).

Positions 1–20 (MSKRCAITGKGPMVGNNVSH) are disordered.

Belongs to the bacterial ribosomal protein bL28 family.

The sequence is that of Large ribosomal subunit protein bL28 from Campylobacter fetus subsp. fetus (strain 82-40).